An 81-amino-acid chain; its full sequence is Sulfur carrier protein TusA (81 aa).

The active-site Cysteine persulfide intermediate is the Cys19.

Belongs to the sulfur carrier protein TusA family. Interacts with IscS.

Its subcellular location is the cytoplasm. It participates in tRNA modification. Its function is as follows. Sulfur carrier protein involved in sulfur trafficking in the cell. Part of a sulfur-relay system required for 2-thiolation during synthesis of 2-thiouridine of the modified wobble base 5-methylaminomethyl-2-thiouridine (mnm(5)s(2)U) in tRNA. Interacts with IscS and stimulates its cysteine desulfurase activity. Accepts an activated sulfur from IscS, which is then transferred to TusD, and thus determines the direction of sulfur flow from IscS to 2-thiouridine formation. Also appears to be involved in sulfur transfer for the biosynthesis of molybdopterin. The sequence is that of Sulfur carrier protein TusA from Cronobacter sakazakii (strain ATCC BAA-894) (Enterobacter sakazakii).